A 290-amino-acid polypeptide reads, in one-letter code: Acetyl-coenzyme A carboxylase carboxyl transferase subunit beta (290 aa).

The 263-residue stretch at 28–290 (VMTKCPQCKK…GGGESGWWRN (263 aa)) folds into the CoA carboxyltransferase N-terminal domain. Zn(2+) contacts are provided by Cys-32, Cys-35, Cys-51, and Cys-54. The C4-type zinc finger occupies 32-54 (CPQCKKIMYTKELVKNLRVCLSC).

It belongs to the AccD/PCCB family. Acetyl-CoA carboxylase is a heterohexamer composed of biotin carboxyl carrier protein (AccB), biotin carboxylase (AccC) and two subunits each of ACCase subunit alpha (AccA) and ACCase subunit beta (AccD). Requires Zn(2+) as cofactor.

Its subcellular location is the cytoplasm. It catalyses the reaction N(6)-carboxybiotinyl-L-lysyl-[protein] + acetyl-CoA = N(6)-biotinyl-L-lysyl-[protein] + malonyl-CoA. It functions in the pathway lipid metabolism; malonyl-CoA biosynthesis; malonyl-CoA from acetyl-CoA: step 1/1. Component of the acetyl coenzyme A carboxylase (ACC) complex. Biotin carboxylase (BC) catalyzes the carboxylation of biotin on its carrier protein (BCCP) and then the CO(2) group is transferred by the transcarboxylase to acetyl-CoA to form malonyl-CoA. This chain is Acetyl-coenzyme A carboxylase carboxyl transferase subunit beta, found in Geobacillus thermodenitrificans (strain NG80-2).